A 547-amino-acid chain; its full sequence is Chaperonin GroEL (547 aa).

Residues 30-33 (TLGP), Lys-51, 87-91 (DGTTT), Gly-415, 479-481 (NAA), and Asp-495 contribute to the ATP site.

Belongs to the chaperonin (HSP60) family. In terms of assembly, forms a cylinder of 14 subunits composed of two heptameric rings stacked back-to-back. Interacts with the co-chaperonin GroES.

The protein localises to the cytoplasm. The catalysed reaction is ATP + H2O + a folded polypeptide = ADP + phosphate + an unfolded polypeptide.. Together with its co-chaperonin GroES, plays an essential role in assisting protein folding. The GroEL-GroES system forms a nano-cage that allows encapsulation of the non-native substrate proteins and provides a physical environment optimized to promote and accelerate protein folding. The chain is Chaperonin GroEL from Pseudomonas aeruginosa (strain UCBPP-PA14).